The primary structure comprises 476 residues: Sensor protein CzcS (476 aa).

The signal sequence occupies residues 1–35 (MRPGTSITPLSLTRRLGLFFALVLSIALASMGAFA). The Periplasmic segment spans residues 37–158 (YSLAAQLEAR…DRKQVTARFR (122 aa)). A helical membrane pass occupies residues 159-179 (TTLVLGTTVGVILTALVGAAI). Residues 180 to 476 (TRRELEPAHV…RPSQDRPVVG (297 aa)) lie on the Cytoplasmic side of the membrane. An HAMP domain is found at 181–234 (RRELEPAHVLIKQINRISVERLSYRVDMPPKPTEVRDIASAFNAMLQRLEDGYQ). The Histidine kinase domain maps to 242–455 (DLAHDLRTPL…TRFTLRFPLN (214 aa)). Residue histidine 245 is modified to Phosphohistidine; by autocatalysis.

It localises to the cell inner membrane. The enzyme catalyses ATP + protein L-histidine = ADP + protein N-phospho-L-histidine.. Functionally, member of the two-component regulatory system CzcS/CzcR involved in the control of cobalt, zinc and cadmium homeostasis. Probably activates CzcR by phosphorylation. The protein is Sensor protein CzcS (czcS) of Cupriavidus metallidurans (strain ATCC 43123 / DSM 2839 / NBRC 102507 / CH34) (Ralstonia metallidurans).